The primary structure comprises 1201 residues: DNA-directed RNA polymerase subunit beta' (1201 aa).

Zn(2+) contacts are provided by Cys-60, Cys-62, Cys-75, and Cys-78. Asp-449, Asp-451, and Asp-453 together coordinate Mg(2+). Cys-818, Cys-892, Cys-899, and Cys-902 together coordinate Zn(2+).

Belongs to the RNA polymerase beta' chain family. The RNAP catalytic core consists of 2 alpha, 1 beta, 1 beta' and 1 omega subunit. When a sigma factor is associated with the core the holoenzyme is formed, which can initiate transcription. Mg(2+) is required as a cofactor. Zn(2+) serves as cofactor.

The catalysed reaction is RNA(n) + a ribonucleoside 5'-triphosphate = RNA(n+1) + diphosphate. In terms of biological role, DNA-dependent RNA polymerase catalyzes the transcription of DNA into RNA using the four ribonucleoside triphosphates as substrates. The sequence is that of DNA-directed RNA polymerase subunit beta' from Listeria innocua serovar 6a (strain ATCC BAA-680 / CLIP 11262).